The primary structure comprises 221 residues: Probable septum site-determining protein MinC (221 aa).

This sequence belongs to the MinC family. As to quaternary structure, interacts with MinD and FtsZ.

Its function is as follows. Cell division inhibitor that blocks the formation of polar Z ring septums. Rapidly oscillates between the poles of the cell to destabilize FtsZ filaments that have formed before they mature into polar Z rings. Prevents FtsZ polymerization. The chain is Probable septum site-determining protein MinC from Shewanella halifaxensis (strain HAW-EB4).